The following is a 479-amino-acid chain: F-box/LRR-repeat protein 16 (479 aa).

Residues 1–92 (MSSPGIDGDP…GPVSGPPVER (92 aa)) are disordered. The segment covering 47–60 (CQPPPPPTLPPPSL) has biased composition (pro residues). The residue at position 92 (Arg92) is an Omega-N-methylarginine. In terms of domain architecture, F-box spans 94–139 (PLATDEKILNGLFWYFSACEKCILAQVCKAWRRVLYQPKFWAGLTP). LRR repeat units follow at residues 321–342 (NLTSLSLSGCSKVTDDGVELVA), 347–369 (KLRSLDLSWCPRITDMALEYVAC), 373–394 (RLEELVLDRCVRITDTGLSYLS), 398–419 (SLRSLYLRWCCQVQDFGLKHLL), 423–444 (NLRLLSLAGCPLLTTTGLSGLV), and 446–470 (LQELEELELTNCPGATPELFKYFSQ).

As to quaternary structure, interacts with SKP1 and CUL1.

Functionally, substrate-recognition component of the SCF (SKP1-CUL1-F-box protein)-type E3 ubiquitin ligase complex. In Mus musculus (Mouse), this protein is F-box/LRR-repeat protein 16 (Fbxl16).